The following is a 304-amino-acid chain: C-type lectin domain family 10 member A (304 aa).

At M1 to H35 the chain is on the cytoplasmic side. A helical; Signal-anchor for type II membrane protein membrane pass occupies residues L36–S56. The Extracellular segment spans residues Q57–S304. 2 N-linked (GlcNAc...) asparagine glycosylation sites follow: N74 and N166. The C-type lectin domain maps to C172–M298. 3 cysteine pairs are disulfide-bonded: C173/C184, C201/C296, and C274/C288.

As to quaternary structure, homooligomer. Interacts with SIGLEC1, which may act as a counter-receptor for CLEC10A in lymph node. As to expression, detected in lymph node in the subcapsular sinus, interfollicular regions, T and B-cell boundary and in the areas surrounding high endothelial venules (at protein level). Expressed on the surface of activated macrophages. Expressed in heart, lung, testis, skeletal muscle, spleen, brain, kidney and thymus. Expressed in P388, RAW 264.7 and M1 cell lines.

It is found in the membrane. Recognizes terminal galactose and N-acetylgalactosamine units. May participate in the interaction between tumoricidal macrophages and tumor cells. Plays a role in the recruitment of inflammatory monocytes to adipose tissue in diet-induced obesity. This chain is C-type lectin domain family 10 member A (Clec10a), found in Mus musculus (Mouse).